A 121-amino-acid chain; its full sequence is Small ribosomal subunit protein uS13 (121 aa).

The segment at G94–K121 is disordered. Residues S106–K121 are compositionally biased toward basic residues.

Belongs to the universal ribosomal protein uS13 family. As to quaternary structure, part of the 30S ribosomal subunit. Forms a loose heterodimer with protein S19. Forms two bridges to the 50S subunit in the 70S ribosome.

Its function is as follows. Located at the top of the head of the 30S subunit, it contacts several helices of the 16S rRNA. In the 70S ribosome it contacts the 23S rRNA (bridge B1a) and protein L5 of the 50S subunit (bridge B1b), connecting the 2 subunits; these bridges are implicated in subunit movement. Contacts the tRNAs in the A and P-sites. The chain is Small ribosomal subunit protein uS13 from Exiguobacterium sibiricum (strain DSM 17290 / CCUG 55495 / CIP 109462 / JCM 13490 / 255-15).